Reading from the N-terminus, the 212-residue chain is tRNA (guanine-N(7)-)-methyltransferase (212 aa).

S-adenosyl-L-methionine contacts are provided by Glu44, Asp69, Asp96, and Asp118. The active site involves Asp118. A substrate-binding site is contributed by Lys122. The segment at Arg124–Arg129 is interaction with RNA. Residues Asp154 and Thr191–Glu194 contribute to the substrate site.

Belongs to the class I-like SAM-binding methyltransferase superfamily. TrmB family.

The enzyme catalyses guanosine(46) in tRNA + S-adenosyl-L-methionine = N(7)-methylguanosine(46) in tRNA + S-adenosyl-L-homocysteine. It participates in tRNA modification; N(7)-methylguanine-tRNA biosynthesis. Its function is as follows. Catalyzes the formation of N(7)-methylguanine at position 46 (m7G46) in tRNA. The sequence is that of tRNA (guanine-N(7)-)-methyltransferase from Streptococcus suis (strain 05ZYH33).